The following is a 456-amino-acid chain: Bifunctional protein GlmU (456 aa).

Residues 1–229 form a pyrophosphorylase region; sequence MTKKALSAVI…VMEVEGANNR (229 aa). UDP-N-acetyl-alpha-D-glucosamine contacts are provided by residues 11-14, Lys-25, Gln-76, 81-82, 103-105, Gly-140, Glu-154, Asn-169, and Asn-227; these read LAAG, GT, and YGD. Asp-105 lines the Mg(2+) pocket. Asn-227 provides a ligand contact to Mg(2+). A linker region spans residues 230–250; that stretch reads LQLAALERYLQNKQASKLLLE. The segment at 251 to 456 is N-acetyltransferase; the sequence is GVMIYDPARF…QGWQRPIKKK (206 aa). UDP-N-acetyl-alpha-D-glucosamine is bound by residues Arg-333 and Lys-351. His-363 acts as the Proton acceptor in catalysis. Residues Tyr-366 and Asn-377 each coordinate UDP-N-acetyl-alpha-D-glucosamine. Acetyl-CoA-binding positions include Ala-380, 386–387, Ser-405, Ala-423, and Arg-440; that span reads NY.

This sequence in the N-terminal section; belongs to the N-acetylglucosamine-1-phosphate uridyltransferase family. The protein in the C-terminal section; belongs to the transferase hexapeptide repeat family. In terms of assembly, homotrimer. It depends on Mg(2+) as a cofactor.

The protein resides in the cytoplasm. It carries out the reaction alpha-D-glucosamine 1-phosphate + acetyl-CoA = N-acetyl-alpha-D-glucosamine 1-phosphate + CoA + H(+). It catalyses the reaction N-acetyl-alpha-D-glucosamine 1-phosphate + UTP + H(+) = UDP-N-acetyl-alpha-D-glucosamine + diphosphate. It functions in the pathway nucleotide-sugar biosynthesis; UDP-N-acetyl-alpha-D-glucosamine biosynthesis; N-acetyl-alpha-D-glucosamine 1-phosphate from alpha-D-glucosamine 6-phosphate (route II): step 2/2. The protein operates within nucleotide-sugar biosynthesis; UDP-N-acetyl-alpha-D-glucosamine biosynthesis; UDP-N-acetyl-alpha-D-glucosamine from N-acetyl-alpha-D-glucosamine 1-phosphate: step 1/1. It participates in bacterial outer membrane biogenesis; LPS lipid A biosynthesis. In terms of biological role, catalyzes the last two sequential reactions in the de novo biosynthetic pathway for UDP-N-acetylglucosamine (UDP-GlcNAc). The C-terminal domain catalyzes the transfer of acetyl group from acetyl coenzyme A to glucosamine-1-phosphate (GlcN-1-P) to produce N-acetylglucosamine-1-phosphate (GlcNAc-1-P), which is converted into UDP-GlcNAc by the transfer of uridine 5-monophosphate (from uridine 5-triphosphate), a reaction catalyzed by the N-terminal domain. This Haemophilus influenzae (strain PittEE) protein is Bifunctional protein GlmU.